The primary structure comprises 697 residues: MNKTPLLSVSPNLHELHICELLGNNANQNSRYSHIVKQYIAEVLQSSDDKIAATNTQPHLLTLGQLGFGDGHEIILLLAALQEANLQNPLIQQQTRIHISVFEQGPVNCKQLQHTWQQQGLLDSDHHLFDFTQALLNGEIAAIEGCQRLSLLQNQIIIDLYQGSPLAQAKTIATPNKQRITHWFALPHTNQEAHSDQYFHQRSVWEYGRLSVDNATFLAASTNDENIAPTIKKQLAFCGFLSSTSFKSTDDIAIAERNALRQQLQQQFAYNPLPPLHSNNNSPIAIIGGGIASASLALSLAERGKDVIIYCKDDTLGQGASGNKQGAIYPLLTPENGSLSQFFQQVFLYSRRRIQALVDDGYDIGHEWCGVLHTGFDQRSQTRLDKIIDGQAWPSEIAFAVSPHQATQLANVDIDKPGFYYPLGGWACPFEFAQASIAKAQTLTKVRIVYNSDISSLESHSSGWQLFSAEDNTPIATHEQVVIASGAQLTQYKQTKNLQITGFRGQVSHVPPQGELAQLNTVICANGYLTPQHNQLHCVGASYVKDPQHLDFCPIEQHENSLKMKQSFPNSNWPNDIDVSNNDARVGVRMVSRDHFPVMGCAPDVEALFTRYAVQQQSKDKPSLWQHYWQTTPAPIYDGLYVLGGLGSRGLSSGPLVAECLAANLCGELSPLSVELQALLSPNRMWLRKLLKGKALM.

The interval 1 to 269 (MNKTPLLSVS…LRQQLQQQFA (269 aa)) is tRNA (mnm(5)s(2)U34)-methyltransferase. Positions 287–697 (IGGGIASASL…RKLLKGKALM (411 aa)) are FAD-dependent cmnm(5)s(2)U34 oxidoreductase.

In the N-terminal section; belongs to the methyltransferase superfamily. tRNA (mnm(5)s(2)U34)-methyltransferase family. It in the C-terminal section; belongs to the DAO family. FAD serves as cofactor.

It is found in the cytoplasm. The enzyme catalyses 5-aminomethyl-2-thiouridine(34) in tRNA + S-adenosyl-L-methionine = 5-methylaminomethyl-2-thiouridine(34) in tRNA + S-adenosyl-L-homocysteine + H(+). Catalyzes the last two steps in the biosynthesis of 5-methylaminomethyl-2-thiouridine (mnm(5)s(2)U) at the wobble position (U34) in tRNA. Catalyzes the FAD-dependent demodification of cmnm(5)s(2)U34 to nm(5)s(2)U34, followed by the transfer of a methyl group from S-adenosyl-L-methionine to nm(5)s(2)U34, to form mnm(5)s(2)U34. This chain is tRNA 5-methylaminomethyl-2-thiouridine biosynthesis bifunctional protein MnmC, found in Shewanella frigidimarina (strain NCIMB 400).